Reading from the N-terminus, the 33-residue chain is rho operon leader peptide (33 aa).

Residues 1–25 (MRSEQISGSSLNPSCRFSSAYSPVT) are compositionally biased toward polar residues. The disordered stretch occupies residues 1–33 (MRSEQISGSSLNPSCRFSSAYSPVTRQRKDMSR).

In Escherichia coli O157:H7, this protein is rho operon leader peptide (rhoL).